The following is a 622-amino-acid chain: Probable potassium transport system protein Kup (622 aa).

Transmembrane regions (helical) follow at residues 8–28 (LAAL…TSVL), 50–70 (VLSI…VVLV), 103–123 (LGIG…TPAI), 137–157 (PHFG…LFAV), 169–189 (FGPV…PHIV), 215–235 (FIIL…YADL), 247–267 (WFSV…ALLL), 285–305 (ALIP…QALI), 337–357 (IYIP…VVMF), 366–386 (AYGI…FFVI), 393–413 (PLAL…AFFG), and 419–439 (LLQG…LMMT).

The protein belongs to the HAK/KUP transporter (TC 2.A.72) family.

It is found in the cell inner membrane. The enzyme catalyses K(+)(in) + H(+)(in) = K(+)(out) + H(+)(out). Functionally, transport of potassium into the cell. Likely operates as a K(+):H(+) symporter. The protein is Probable potassium transport system protein Kup of Paracidovorax citrulli (strain AAC00-1) (Acidovorax citrulli).